We begin with the raw amino-acid sequence, 1095 residues long: DNA-directed RNA polymerase subunit beta (1095 aa).

The tract at residues 1069 to 1095 (DLMQDVNPRRSTPSRPTYESLGKEYEE) is disordered.

This sequence belongs to the RNA polymerase beta chain family. In cyanobacteria the RNAP catalytic core is composed of 2 alpha, 1 beta, 1 beta', 1 gamma and 1 omega subunit. When a sigma factor is associated with the core the holoenzyme is formed, which can initiate transcription.

The enzyme catalyses RNA(n) + a ribonucleoside 5'-triphosphate = RNA(n+1) + diphosphate. DNA-dependent RNA polymerase catalyzes the transcription of DNA into RNA using the four ribonucleoside triphosphates as substrates. The chain is DNA-directed RNA polymerase subunit beta from Prochlorococcus marinus (strain NATL1A).